Here is a 387-residue protein sequence, read N- to C-terminus: Mannitol-1-phosphate 5-dehydrogenase (387 aa).

3–14 (ALHFGAGNIGRG) is an NAD(+) binding site.

Belongs to the mannitol dehydrogenase family.

The enzyme catalyses D-mannitol 1-phosphate + NAD(+) = beta-D-fructose 6-phosphate + NADH + H(+). The sequence is that of Mannitol-1-phosphate 5-dehydrogenase from Yersinia pseudotuberculosis serotype O:1b (strain IP 31758).